The primary structure comprises 596 residues: Endoribonuclease ZC3H12A (596 aa).

Disordered stretches follow at residues 1–48 (MSDP…TSEL) and 97–134 (QALTAPSPQPPLVPRGGSTPKPSTLEPSLPEEDREGSD). A compositionally biased stretch (polar residues) spans 10 to 19 (VQESNPTMSL). The segment at 42-87 (EAPTSELQMKVDFFRKLGYSSSEIHSVLQKLGVQADTNTVLGELVK) is ubiquitin association domain. The necessary for interaction with TANK stretch occupies residues 81–150 (VLGELVKHGS…DGSNVAMSHG (70 aa)). The interval 112-281 (GGSTPKPSTL…DKFMPPDDPL (170 aa)) is RNase. The RNase NYN domain occupies 135-290 (LRPVVIDGSN…LGRHGPSLDN (156 aa)). Residues 214–220 (RRVGGKR) are RNA binding. Residue aspartate 226 participates in Mg(2+) binding. Disordered regions lie at residues 278-306 (DDPLGRHGPSLDNFLRKKPLPSEHRKQPC) and 340-417 (NALL…PTEW). A C3H1-type zinc finger spans residues 301–324 (HRKQPCPYGKKCTYGIKCRFFHPE). The tract at residues 301 to 454 (HRKQPCPYGK…SELWGVRGGS (154 aa)) is necessary for interaction with ZC3H12D. Serine 344 bears the Phosphoserine mark. Residues 356-368 (QRPSPASQSSSVS) are compositionally biased toward low complexity. Phosphoserine is present on residues serine 435 and serine 439. A disordered region spans residues 511–543 (YWSEPYPLPPPTPVLQEPQRPSPGAGGGPWGRV). A compositionally biased stretch (low complexity) spans 524-533 (VLQEPQRPSP).

This sequence belongs to the ZC3H12 family. As to quaternary structure, oligomer. Found in a deubiquitination complex with TANK, USP10 and ZC3H12A; this complex inhibits genotoxic stress- or interleukin-1-beta-mediated NF-kappaB activation by promoting IKBKG or TRAF6 deubiquitination. Interacts with IKBKG; this interaction increases in response to DNA damage. Interacts with TANK; this interaction increases in response to DNA damage and serves as a bridge to anchor both TANK and USP10 into a deubiquitinating complex. Interacts with TRAF6; this interaction increases in response to DNA damage and is stimulated by TANK. Interacts with USP10; this interaction increases in response to DNA damage and serves as a bridge to anchor both TANK and USP10 into a deubiquitinating complex. Interacts with ZC3H12D. Interacts with TNRC6A. Interacts with IKBKB/IKKB. Interacts with IKBKB/IKKB. Interacts with IKBKB/IKKB. Interacts with BTRC; the interaction occurs when ZC3H12A is phosphorylated in a IKBKB/IKKB-dependent manner. Interacts with IRAK1; this interaction increases the interaction between ZC3H12A and IKBKB/IKKB. Interacts with UPF1; this interaction occurs in a mRNA translationally active- and termination-dependent manner and is essential for ZC3H12A-mediated degradation of target mRNAs. Associates with ribosomes. Interacts with ubiquitin. Mg(2+) is required as a cofactor. In terms of processing, proteolytically cleaved between Arg-111 and Arg-214 by MALT1 in activated T-cells; cleavage at Arg-111 is critical for promoting ZC3H12A degradation in response to T-cell receptor (TCR) stimulation, and hence is necessary for prolonging the stability of a set of mRNAs controlling T-cell activation and Th17 cell differentiation. Phosphorylated by IRAK1; phosphorylation is necessary for subsequent phosphorylation by the I-kappa-B-kinase (IKK) complex. Phosphorylated by I-kappa-B-kinases (IKKs) at Ser-435 and Ser-439 upon lipopolysaccharide (LPS) or IL1B stimulation in macrophages through the MyD88-dependent signaling pathway; these phosphorylations promote rapid ubiquitin proteasome-mediated degradation of ZC3H12A in macrophages and hence allows its target mRNAs, such as IL6, to escape from degradation and accumulate during the inflammatory response. Post-translationally, ubiquitinated; ubiquitination is induced in response to interleukin IL1 receptor stimuli in a IKBKB/IKKB and IRAK1-dependent manner, leading to proteasome-mediated degradation. In terms of tissue distribution, expressed in CD4(+) helper T-cells (at protein level). Highly expressed in macrophages. Expressed in lung, lymph nodes, spleen and thymus. Expressed weakly in heart. Expressed weakly in cardiomyocytes (at protein level). Expressed in spleen, lung, intestine, brown adipose tissue and thymus. Weakly expressed in the heart. Weakly expressed in cardiomyocytes.

It localises to the nucleus. The protein localises to the cytoplasm. Its subcellular location is the rough endoplasmic reticulum membrane. The protein resides in the cytoplasmic granule. It is found in the P-body. Endoribonuclease involved in various biological functions such as cellular inflammatory response and immune homeostasis, glial differentiation of neuroprogenitor cells, cell death of cardiomyocytes, adipogenesis and angiogenesis. Functions as an endoribonuclease involved in mRNA decay. Modulates the inflammatory response by promoting the degradation of a set of translationally active cytokine-induced inflammation-related mRNAs, such as IL6 and IL12B, during the early phase of inflammation. Prevents aberrant T-cell-mediated immune reaction by degradation of multiple mRNAs controlling T-cell activation, such as those encoding cytokines (IL6 and IL2), cell surface receptors (ICOS, TNFRSF4 and TNFR2) and transcription factor (REL). Inhibits cooperatively with ZC3H12A the differentiation of helper T cells Th17 in lungs. They repress target mRNA encoding the Th17 cell-promoting factors IL6, ICOS, REL, IRF4, NFKBID and NFKBIZ. The cooperation requires RNA-binding by RC3H1 and the nuclease activity of ZC3H12A. Together with RC3H1, destabilizes TNFRSF4/OX40 mRNA by binding to the conserved stem loop structure in its 3'UTR. Self regulates by destabilizing its own mRNA. Cleaves mRNA harboring a stem-loop (SL), often located in their 3'-UTRs, during the early phase of inflammation in a helicase UPF1-dependent manner. Plays a role in the inhibition of microRNAs (miRNAs) biogenesis. Cleaves the terminal loop of a set of precursor miRNAs (pre-miRNAs) important for the regulation of the inflammatory response leading to their degradation, and thus preventing the biosynthesis of mature miRNAs. Also plays a role in promoting angiogenesis in response to inflammatory cytokines by inhibiting the production of antiangiogenic microRNAs via its anti-dicer RNase activity. Affects the overall ubiquitination of cellular proteins. Positively regulates deubiquitinase activity promoting the cleavage at 'Lys-48'- and 'Lys-63'-linked polyubiquitin chains on TNF receptor-associated factors (TRAFs), preventing JNK and NF-kappa-B signaling pathway activation, and hence negatively regulating macrophage-mediated inflammatory response and immune homeostasis. Induces also deubiquitination of the transcription factor HIF1A, probably leading to its stabilization and nuclear import, thereby positively regulating the expression of proangiogenic HIF1A-targeted genes. Involved in a TANK-dependent negative feedback response to attenuate NF-kappaB activation through the deubiquitination of IKBKG or TRAF6 in response to interleukin-1-beta (IL1B) stimulation or upon DNA damage. Prevents stress granules (SGs) formation and promotes macrophage apoptosis under stress conditions, including arsenite-induced oxidative stress, heat shock, and energy deprivation. Plays a role in the regulation of macrophage polarization; promotes IL4-induced polarization of macrophages M1 into anti-inflammatory M2 state. May also act as a transcription factor that regulates the expression of multiple genes involved in inflammatory response, angiogenesis, adipogenesis and apoptosis. Functions as a positive regulator of glial differentiation of neuroprogenitor cells through an amyloid precursor protein (APP)-dependent signaling pathway. Attenuates septic myocardial contractile dysfunction in response to lipopolysaccharide (LPS) by reducing I-kappa-B-kinase (IKK)-mediated NF-kappa-B activation, and hence myocardial pro-inflammatory cytokine production. The sequence is that of Endoribonuclease ZC3H12A from Mus musculus (Mouse).